The sequence spans 186 residues: Probable peptidoglycan L,D-endopeptidase MepK (186 aa).

The N-terminal stretch at 1–30 (MNYVDQNKRKWLSLGGIALGISILPNSVLA) is a signal peptide. The Zn(2+) site is built by His134, Asp141, and His174.

The protein belongs to the peptidase M15 family. Zn(2+) is required as a cofactor.

It participates in cell wall biogenesis; cell wall polysaccharide biosynthesis. In terms of biological role, l,D-endopeptidase that cleaves meso-diaminopimelic acid (mDAP)-mDAP cross-links in peptidoglycan. It works in conjunction with other elongation-specific D,D-endopeptidases to make space for efficient incorporation of nascent peptidoglycan strands into the sacculus and thus enable cell wall expansion. This is Probable peptidoglycan L,D-endopeptidase MepK from Haemophilus influenzae (strain ATCC 51907 / DSM 11121 / KW20 / Rd).